We begin with the raw amino-acid sequence, 107 residues long: EMBRYO SURROUNDING FACTOR 1-like protein 5 (107 aa).

The first 22 residues, 1–22 (MSLLRFAILCIIFVSLFGVHEC), serve as a signal peptide directing secretion. Intrachain disulfides connect Cys35-Cys49, Cys40-Cys69, Cys47-Cys65, and Cys50-Cys58. The chain crosses the membrane as a helical span at residues 87-107 (GLGPPIYLFFLGQFIYFVLGL).

The protein belongs to the MEG family. Expressed in flowers.

It localises to the membrane. This chain is EMBRYO SURROUNDING FACTOR 1-like protein 5 (ESFL5), found in Arabidopsis thaliana (Mouse-ear cress).